The following is a 645-amino-acid chain: Leucine-rich repeat protein soc-2 homolog (645 aa).

A compositionally biased stretch (low complexity) spans 1-19; that stretch reads MNLCSSGATASTTSLSSTG. 2 disordered regions span residues 1–67 and 83–151; these read MNLC…AGGS and NSPA…IQAD. 2 stretches are compositionally biased toward gly residues: residues 26–49 and 88–97; these read GVPGGGAEGGGGDGGSGNSGGGGS and GAGGASGSTG. The segment covering 98 to 107 has biased composition (low complexity); that stretch reads SGQQPTGSNG. LRR repeat units lie at residues 165 to 186, 188 to 209, 211 to 232, 234 to 255, 257 to 278, 280 to 301, 303 to 324, 326 to 347, 349 to 371, 372 to 393, 396 to 417, 420 to 441, 444 to 465, 467 to 488, 490 to 511, 513 to 534, 536 to 557, 559 to 580, 582 to 604, and 606 to 627; these read GIKRLDLSKSSITVIPSTVKEC, HLTELYLYSNKIGQLPPEIGCL, SLRNLALNENSLTSLPESLQNC, QLKVLDLRHNKLAEIPPVIYRL, SLTTLYLRFNRITAVADDLRQL, NLTMLSLRENKIRELGSAIGAL, NLTTLDVSHNHLEHLPEDIGNC, NLSALDLQHNELLDIPDSIGNL, SLVRLGMRYNRLSSVPATLKNCK, SMDEFNVEGNGITQLPDGMLAS, GLTTITLSRNQFASYPTGGPAQ, NVYSINLEHNRIDKIPYGIFSR, GLTKLNMKENMLTALPLDIGTW, NMVELNLATNALQKLPDDIMNL, NLEILILSNNMLKKIPNTIGNL, RLRILDLEENRIEVLPHEIGLL, ELQRLILQTNQITMLPRSIGHL, NLTHLSVSENNLQFLPEEIGSL, SLENLYINQNPGLEKLPFELALC, and NLKYLNIDKCPLSTIPPEIQAG.

The protein belongs to the SHOC2 family.

Its function is as follows. Acts as a Ras effector and participates in MAPK pathway activation. Probably acts as a regulatory subunit of protein phosphatase that specifically dephosphorylates Raf kinase and stimulate Raf activity at specialized signaling complexes upon Ras activation. The chain is Leucine-rich repeat protein soc-2 homolog (Sur-8) from Drosophila yakuba (Fruit fly).